The primary structure comprises 374 residues: bZIP transcription factor TRAB1 (374 aa).

A compositionally biased stretch (basic and acidic residues) spans Met1–Gly13. Disordered stretches follow at residues Met1–Ala23 and Ala117–Leu142. The segment covering Ala14 to Ala23 has biased composition (low complexity). The 64-residue stretch at Val286–Asn349 folds into the bZIP domain. The basic motif stretch occupies residues Arg288 to Lys307. The interval Leu314 to Ile335 is leucine-zipper.

It belongs to the bZIP family. As to quaternary structure, interacts with VP1 (via N-terminus). Expressed in roots, leaves and embryos.

Its subcellular location is the nucleus. Functionally, transcription activator that mediates abscisic acid (ABA) signaling. Binds specifically to the ABA-responsive element (ABRE) of the EMP1 and RAB16A gene promoters. The chain is bZIP transcription factor TRAB1 from Oryza sativa subsp. japonica (Rice).